Here is a 411-residue protein sequence, read N- to C-terminus: Serine hydroxymethyltransferase (411 aa).

Residues L117 and 121–123 each bind (6S)-5,6,7,8-tetrahydrofolate; that span reads GHL. K226 is modified (N6-(pyridoxal phosphate)lysine). (6S)-5,6,7,8-tetrahydrofolate is bound by residues E241 and 349 to 351; that span reads SPF.

The protein belongs to the SHMT family. Homodimer. The cofactor is pyridoxal 5'-phosphate.

The protein resides in the cytoplasm. The enzyme catalyses (6R)-5,10-methylene-5,6,7,8-tetrahydrofolate + glycine + H2O = (6S)-5,6,7,8-tetrahydrofolate + L-serine. It functions in the pathway one-carbon metabolism; tetrahydrofolate interconversion. It participates in amino-acid biosynthesis; glycine biosynthesis; glycine from L-serine: step 1/1. In terms of biological role, catalyzes the reversible interconversion of serine and glycine with tetrahydrofolate (THF) serving as the one-carbon carrier. This reaction serves as the major source of one-carbon groups required for the biosynthesis of purines, thymidylate, methionine, and other important biomolecules. Also exhibits THF-independent aldolase activity toward beta-hydroxyamino acids, producing glycine and aldehydes, via a retro-aldol mechanism. The protein is Serine hydroxymethyltransferase of Macrococcus caseolyticus (strain JCSC5402) (Macrococcoides caseolyticum).